A 439-amino-acid polypeptide reads, in one-letter code: Microfibrillar-associated protein 1 (439 aa).

The span at 1–17 shows a compositional bias: polar residues; the sequence is MSVPSSLMKQPPIQSTA. The tract at residues 1–200 is disordered; it reads MSVPSSLMKQ…SEDEMEPRLK (200 aa). S2 carries the post-translational modification N-acetylserine. The span at 23–34 shows a compositional bias: basic and acidic residues; that stretch reads RNEKGEISMEKV. 2 positions are modified to phosphoserine: S52 and S53. Residues 61-70 show a composition bias toward basic and acidic residues; sequence QFIKKAKEQE. A Glycyl lysine isopeptide (Lys-Gly) (interchain with G-Cter in SUMO2) cross-link involves residue K67. Residues 71–81 show a composition bias toward acidic residues; the sequence is AEPEEQEEDSS. 5 positions are modified to phosphoserine: S94, S116, S118, S132, and S133. Acidic residues-rich tracts occupy residues 112 to 122 and 131 to 144; these read VVGESDSEVEG and DSSE…DEEE. Residues 145–163 show a composition bias toward basic and acidic residues; sequence IERRRGMMRQRAQERKNEE. Residues 178 to 195 are compositionally biased toward acidic residues; sequence ESESESEYEEYTDSEDEM. K249 participates in a covalent cross-link: Glycyl lysine isopeptide (Lys-Gly) (interchain with G-Cter in SUMO2). At T267 the chain carries Phosphothreonine. K357 is covalently cross-linked (Glycyl lysine isopeptide (Lys-Gly) (interchain with G-Cter in SUMO2)). Residue S361 is modified to Phosphoserine. Glycyl lysine isopeptide (Lys-Gly) (interchain with G-Cter in SUMO2) cross-links involve residues K371, K381, K415, and K418. S432 carries the phosphoserine modification.

Belongs to the MFAP1 family. Component of the spliceosome B complex. Interacts with PRPF38A (via N-terminal interaction domain).

The protein localises to the nucleus. In terms of biological role, involved in pre-mRNA splicing as a component of the spliceosome. This is Microfibrillar-associated protein 1 from Bos taurus (Bovine).